The primary structure comprises 347 residues: NADH-ubiquinone oxidoreductase chain 2 (347 aa).

10 consecutive transmembrane segments (helical) span residues 1–21 (MNPL…LIVM), 25–45 (HWFM…PLLT), 67–87 (SMLL…WSIM), 111–131 (FHFW…LILL), 144–164 (MIMP…SIAI), 178–198 (IMAY…AYNP), 201–221 (TLLN…LLMI), 237–257 (LPLI…LPPL), 274–294 (SSII…YFYT), and 326–346 (LPLM…MPIL).

Belongs to the complex I subunit 2 family. As to quaternary structure, core subunit of respiratory chain NADH dehydrogenase (Complex I) which is composed of 45 different subunits. Interacts with TMEM242.

It is found in the mitochondrion inner membrane. It carries out the reaction a ubiquinone + NADH + 5 H(+)(in) = a ubiquinol + NAD(+) + 4 H(+)(out). Its function is as follows. Core subunit of the mitochondrial membrane respiratory chain NADH dehydrogenase (Complex I) which catalyzes electron transfer from NADH through the respiratory chain, using ubiquinone as an electron acceptor. Essential for the catalytic activity and assembly of complex I. This chain is NADH-ubiquinone oxidoreductase chain 2, found in Myotis simus (Velvety myotis).